The chain runs to 245 residues: Uridylate kinase (245 aa).

12–15 (KLSG) is a binding site for ATP. The interval 20 to 25 (GEKGVG) is involved in allosteric activation by GTP. Residue Gly54 participates in UMP binding. ATP-binding residues include Gly55 and Arg59. UMP-binding positions include Asp74 and 135 to 142 (VGSPYFST). ATP-binding residues include Asn163, Tyr169, and Asp172.

It belongs to the UMP kinase family. As to quaternary structure, homohexamer.

It localises to the cytoplasm. It catalyses the reaction UMP + ATP = UDP + ADP. The protein operates within pyrimidine metabolism; CTP biosynthesis via de novo pathway; UDP from UMP (UMPK route): step 1/1. Its activity is regulated as follows. Allosterically activated by GTP. Inhibited by UTP. Catalyzes the reversible phosphorylation of UMP to UDP. The sequence is that of Uridylate kinase from Streptococcus mutans serotype c (strain ATCC 700610 / UA159).